The following is a 261-amino-acid chain: Phosphoinositide-3-kinase-interacting protein 1 (261 aa).

Residues 1 to 21 (MLLAWVRTILVSNMLLAEAYG) form the signal peptide. Residues 22 to 166 (SGGCFWDNGH…NSKEKKDLGT (145 aa)) lie on the Extracellular side of the membrane. Residues 24–101 (GCFWDNGHLY…EKRPCQDLRC (78 aa)) form the Kringle domain. 3 disulfides stabilise this stretch: Cys25–Cys101, Cys46–Cys82, and Cys70–Cys96. Basic and acidic residues predominate over residues 90-101 (APEKRPCQDLRC). Residues 90–122 (APEKRPCQDLRCPDTTSQGLPTSATETEEAAEV) are disordered. A helical membrane pass occupies residues 167-187 (LGYVLGITMMVIIVVIGAGIV). At 188 to 261 (LGYTYKRGKD…LMGQAGTPGA (74 aa)) the chain is on the cytoplasmic side.

The protein localises to the cell membrane. Functionally, negative regulator of hepatic phosphatidylinositol 3-kinase (PI3K) activity. This Bos taurus (Bovine) protein is Phosphoinositide-3-kinase-interacting protein 1 (PIK3IP1).